The primary structure comprises 295 residues: Acetylglutamate kinase (295 aa).

Residues 64–65 (GG), arginine 86, and asparagine 179 contribute to the substrate site.

Belongs to the acetylglutamate kinase family. ArgB subfamily.

The protein localises to the cytoplasm. The enzyme catalyses N-acetyl-L-glutamate + ATP = N-acetyl-L-glutamyl 5-phosphate + ADP. It functions in the pathway amino-acid biosynthesis; L-arginine biosynthesis; N(2)-acetyl-L-ornithine from L-glutamate: step 2/4. In terms of biological role, catalyzes the ATP-dependent phosphorylation of N-acetyl-L-glutamate. This Thermosynechococcus vestitus (strain NIES-2133 / IAM M-273 / BP-1) protein is Acetylglutamate kinase.